The chain runs to 364 residues: UDP-N-acetylglucosamine--N-acetylmuramyl-(pentapeptide) pyrophosphoryl-undecaprenol N-acetylglucosamine transferase (364 aa).

Residues 10 to 12 (TGG), N128, R170, S199, I250, and Q295 each bind UDP-N-acetyl-alpha-D-glucosamine.

Belongs to the glycosyltransferase 28 family. MurG subfamily.

The protein resides in the cell inner membrane. It carries out the reaction di-trans,octa-cis-undecaprenyl diphospho-N-acetyl-alpha-D-muramoyl-L-alanyl-D-glutamyl-meso-2,6-diaminopimeloyl-D-alanyl-D-alanine + UDP-N-acetyl-alpha-D-glucosamine = di-trans,octa-cis-undecaprenyl diphospho-[N-acetyl-alpha-D-glucosaminyl-(1-&gt;4)]-N-acetyl-alpha-D-muramoyl-L-alanyl-D-glutamyl-meso-2,6-diaminopimeloyl-D-alanyl-D-alanine + UDP + H(+). Its pathway is cell wall biogenesis; peptidoglycan biosynthesis. Functionally, cell wall formation. Catalyzes the transfer of a GlcNAc subunit on undecaprenyl-pyrophosphoryl-MurNAc-pentapeptide (lipid intermediate I) to form undecaprenyl-pyrophosphoryl-MurNAc-(pentapeptide)GlcNAc (lipid intermediate II). The polypeptide is UDP-N-acetylglucosamine--N-acetylmuramyl-(pentapeptide) pyrophosphoryl-undecaprenol N-acetylglucosamine transferase (Chlorobaculum tepidum (strain ATCC 49652 / DSM 12025 / NBRC 103806 / TLS) (Chlorobium tepidum)).